Here is a 253-residue protein sequence, read N- to C-terminus: Ubiquinone/menaquinone biosynthesis C-methyltransferase UbiE (253 aa).

S-adenosyl-L-methionine contacts are provided by residues threonine 76, aspartate 97, 125–126 (NA), and serine 142.

Belongs to the class I-like SAM-binding methyltransferase superfamily. MenG/UbiE family.

It carries out the reaction a 2-demethylmenaquinol + S-adenosyl-L-methionine = a menaquinol + S-adenosyl-L-homocysteine + H(+). The enzyme catalyses a 2-methoxy-6-(all-trans-polyprenyl)benzene-1,4-diol + S-adenosyl-L-methionine = a 5-methoxy-2-methyl-3-(all-trans-polyprenyl)benzene-1,4-diol + S-adenosyl-L-homocysteine + H(+). It participates in quinol/quinone metabolism; menaquinone biosynthesis; menaquinol from 1,4-dihydroxy-2-naphthoate: step 2/2. The protein operates within cofactor biosynthesis; ubiquinone biosynthesis. Its function is as follows. Methyltransferase required for the conversion of demethylmenaquinol (DMKH2) to menaquinol (MKH2) and the conversion of 2-polyprenyl-6-methoxy-1,4-benzoquinol (DDMQH2) to 2-polyprenyl-3-methyl-6-methoxy-1,4-benzoquinol (DMQH2). This is Ubiquinone/menaquinone biosynthesis C-methyltransferase UbiE from Xylella fastidiosa (strain M23).